A 64-amino-acid polypeptide reads, in one-letter code: Conotoxin Pn-B01121 (64 aa).

Positions 1-22 (MCCLPVFVILLLLIASAPSVDA) are cleaved as a signal peptide. A propeptide spanning residues 23 to 48 (LPKTKDDMSLASFHDNAKRTLQILSN) is cleaved from the precursor. Tryptophan amide is present on W63.

It belongs to the conotoxin T superfamily. Post-translationally, contains 2 disulfide bonds that can be either 'C1-C3, C2-C4' or 'C1-C4, C2-C3', since these disulfide connectivities have been observed for conotoxins with cysteine framework V (for examples, see AC P0DQQ7 and AC P81755). As to expression, expressed by the venom duct.

Its subcellular location is the secreted. This Conus pennaceus (Feathered cone) protein is Conotoxin Pn-B01121.